The sequence spans 682 residues: Histone deacetylase 18 (682 aa).

Residues 59-382 (KVGLVYDETM…SLACVQVLLE (324 aa)) are histone deacetylase. His191 (proton donor/acceptor) is an active-site residue. Zn(2+) contacts are provided by Asp231, His233, and Asp324. Residues 430–608 (SAERNSADAL…DKELQEDRSR (179 aa)) are a coiled coil.

This sequence belongs to the histone deacetylase family. HD type 2 subfamily. Requires Zn(2+) as cofactor. As to expression, expressed in roots, stems, young rosette leaves, flowers and siliques.

It localises to the nucleus. The protein localises to the cytoplasm. It carries out the reaction N(6)-acetyl-L-lysyl-[histone] + H2O = L-lysyl-[histone] + acetate. Responsible for the deacetylation of lysine residues on the N-terminal part of the core histones (H2A, H2B, H3 and H4). Histone deacetylation gives a tag for epigenetic repression and plays an important role in transcriptional regulation, cell cycle progression and developmental events. Histone deacetylases act via the formation of large multiprotein complexes. Required for appropriate cellular patterning in the root epidermis. Involved in the differentiation of hair and non-hair cells in the root epidermis. Is not directly involved in the regulation of the expression of pattern genes. Regulates the transcription of certain kinase genes, which are components of a positional information relay system, by changing their histone acetylation status. The polypeptide is Histone deacetylase 18 (Arabidopsis thaliana (Mouse-ear cress)).